A 536-amino-acid polypeptide reads, in one-letter code: GMP synthase [glutamine-hydrolyzing] (536 aa).

A Glutamine amidotransferase type-1 domain is found at 4-206 (KILILDFGSQ…VLDICGARAD (203 aa)). The active-site Nucleophile is the C85. Catalysis depends on residues H180 and E182. Positions 207–404 (WIMGDYISEA…LGLPYHMVYR (198 aa)) constitute a GMPS ATP-PPase domain. 234–240 (SGGVDSS) provides a ligand contact to ATP.

Homodimer.

It catalyses the reaction XMP + L-glutamine + ATP + H2O = GMP + L-glutamate + AMP + diphosphate + 2 H(+). It functions in the pathway purine metabolism; GMP biosynthesis; GMP from XMP (L-Gln route): step 1/1. Functionally, catalyzes the synthesis of GMP from XMP. This is GMP synthase [glutamine-hydrolyzing] from Albidiferax ferrireducens (strain ATCC BAA-621 / DSM 15236 / T118) (Rhodoferax ferrireducens).